We begin with the raw amino-acid sequence, 487 residues long: Probable cobyric acid synthase (487 aa).

In terms of domain architecture, GATase cobBQ-type spans Asp-249–Phe-435. Cys-328 (nucleophile) is an active-site residue. His-427 is a catalytic residue.

It belongs to the CobB/CobQ family. CobQ subfamily.

Its pathway is cofactor biosynthesis; adenosylcobalamin biosynthesis. In terms of biological role, catalyzes amidations at positions B, D, E, and G on adenosylcobyrinic A,C-diamide. NH(2) groups are provided by glutamine, and one molecule of ATP is hydrogenolyzed for each amidation. The protein is Probable cobyric acid synthase of Methanocella arvoryzae (strain DSM 22066 / NBRC 105507 / MRE50).